Reading from the N-terminus, the 361-residue chain is 3-dehydroquinate synthase (361 aa).

The protein belongs to the archaeal-type DHQ synthase family.

It carries out the reaction 2-amino-2,3,7-trideoxy-D-lyxo-hept-6-ulosonate + NAD(+) + H2O = 3-dehydroquinate + NH4(+) + NADH + H(+). Catalyzes the oxidative deamination and cyclization of 2-amino-3,7-dideoxy-D-threo-hept-6-ulosonic acid (ADH) to yield 3-dehydroquinate (DHQ), which is fed into the canonical shikimic pathway of aromatic amino acid biosynthesis. This chain is 3-dehydroquinate synthase, found in Methanococcus vannielii (strain ATCC 35089 / DSM 1224 / JCM 13029 / OCM 148 / SB).